A 336-amino-acid polypeptide reads, in one-letter code: Phosphate acyltransferase (336 aa).

Belongs to the PlsX family. Homodimer. Probably interacts with PlsY.

It localises to the cytoplasm. The catalysed reaction is a fatty acyl-[ACP] + phosphate = an acyl phosphate + holo-[ACP]. The protein operates within lipid metabolism; phospholipid metabolism. Catalyzes the reversible formation of acyl-phosphate (acyl-PO(4)) from acyl-[acyl-carrier-protein] (acyl-ACP). This enzyme utilizes acyl-ACP as fatty acyl donor, but not acyl-CoA. This is Phosphate acyltransferase from Pseudomonas paraeruginosa (strain DSM 24068 / PA7) (Pseudomonas aeruginosa (strain PA7)).